Consider the following 361-residue polypeptide: Glutaminyl-peptide cyclotransferase (361 aa).

An N-terminal signal peptide occupies residues 1–28 (MAGCRDPRVVDTLHLLLLVAVLPLAVSG). Residue Asn-49 is glycosylated (N-linked (GlcNAc...) asparagine). The cysteines at positions 139 and 164 are disulfide-linked. A Zn(2+)-binding site is contributed by Asp-159. Residue Asn-183 is glycosylated (N-linked (GlcNAc...) asparagine). The active-site Proton acceptor is Glu-201. Residue Glu-202 coordinates Zn(2+). Asp-248 functions as the Proton acceptor in the catalytic mechanism. His-330 lines the Zn(2+) pocket.

This sequence belongs to the glutaminyl-peptide cyclotransferase family. As to expression, expressed mainly in brain tissue.

Its subcellular location is the secreted. It carries out the reaction N-terminal L-glutaminyl-[peptide] = N-terminal 5-oxo-L-prolyl-[peptide] + NH4(+). Its function is as follows. Responsible for the biosynthesis of pyroglutamyl peptides. Has a bias against acidic and tryptophan residues adjacent to the N-terminal glutaminyl residue and a lack of importance of chain length after the second residue. Also catalyzes N-terminal pyroglutamate formation. In Bos taurus (Bovine), this protein is Glutaminyl-peptide cyclotransferase (QPCT).